The chain runs to 860 residues: Leucine--tRNA ligase (860 aa).

The 'HIGH' region signature appears at 42-52 (PYPSGRLHMGH). The 'KMSKS' region signature appears at 619 to 623 (KMSKS). ATP is bound at residue K622.

The protein belongs to the class-I aminoacyl-tRNA synthetase family.

It is found in the cytoplasm. The enzyme catalyses tRNA(Leu) + L-leucine + ATP = L-leucyl-tRNA(Leu) + AMP + diphosphate. This Pectobacterium carotovorum subsp. carotovorum (strain PC1) protein is Leucine--tRNA ligase.